The following is a 78-amino-acid chain: RNA-binding protein Hfq (78 aa).

A Sm domain is found at 10–69; that stretch reads DPFLNALRKEHVPVSIYLVNGIKLQGNIESFDQYVVLLRNTVTQMVYKHAISTVVPARPV.

It belongs to the Hfq family. As to quaternary structure, homohexamer.

In terms of biological role, RNA chaperone that binds small regulatory RNA (sRNAs) and mRNAs to facilitate mRNA translational regulation in response to envelope stress, environmental stress and changes in metabolite concentrations. Also binds with high specificity to tRNAs. This chain is RNA-binding protein Hfq, found in Paraburkholderia phymatum (strain DSM 17167 / CIP 108236 / LMG 21445 / STM815) (Burkholderia phymatum).